The following is a 130-amino-acid chain: Small ribosomal subunit protein uS9 (130 aa).

The segment at 109–130 is disordered; the sequence is RAKERKKYGLKAARRAPQFSKR. Residues 111–130 are compositionally biased toward basic residues; it reads KERKKYGLKAARRAPQFSKR.

It belongs to the universal ribosomal protein uS9 family.

This is Small ribosomal subunit protein uS9 from Heliobacterium modesticaldum (strain ATCC 51547 / Ice1).